A 180-amino-acid polypeptide reads, in one-letter code: Fucolectin-2 (180 aa).

A signal peptide spans 1–22 (MKVKMIMLLFQILAILTLKSDS). Residues 31-179 (QENVALRGRA…VEVNVLFPAP (149 aa)) form an F5/8 type C-like region. Residues Asn58, Asp61, Asn63, and Ser72 each contribute to the Ca(2+) site. 3 disulfide bridges follow: Cys73/Cys168, Cys104/Cys105, and Cys130/Cys146. Residues His75 and Arg101 each contribute to the alpha-L-fucose site. A Cell attachment site motif is present at residues 101–103 (RGD). Arg108 is a binding site for alpha-L-fucose. The Ca(2+) site is built by Cys168 and Glu169.

It belongs to the fucolectin family. In terms of assembly, homotrimer. Parenchymal hepatocytes.

The protein localises to the secreted. It localises to the extracellular space. Functionally, acts as a defensive agent. Recognizes blood group fucosylated oligosaccharides including A, B, H and Lewis B-type antigens. Does not recognize Lewis A antigen and has low affinity for monovalent haptens. This chain is Fucolectin-2, found in Anguilla japonica (Japanese eel).